Reading from the N-terminus, the 260-residue chain is Thiazole synthase (260 aa).

The active-site Schiff-base intermediate with DXP is Lys101. Residues Gly162, 188 to 189, and 210 to 211 contribute to the 1-deoxy-D-xylulose 5-phosphate site; these read AG and NT.

This sequence belongs to the ThiG family. In terms of assembly, homotetramer. Forms heterodimers with either ThiH or ThiS.

The protein localises to the cytoplasm. It catalyses the reaction [ThiS sulfur-carrier protein]-C-terminal-Gly-aminoethanethioate + 2-iminoacetate + 1-deoxy-D-xylulose 5-phosphate = [ThiS sulfur-carrier protein]-C-terminal Gly-Gly + 2-[(2R,5Z)-2-carboxy-4-methylthiazol-5(2H)-ylidene]ethyl phosphate + 2 H2O + H(+). The protein operates within cofactor biosynthesis; thiamine diphosphate biosynthesis. In terms of biological role, catalyzes the rearrangement of 1-deoxy-D-xylulose 5-phosphate (DXP) to produce the thiazole phosphate moiety of thiamine. Sulfur is provided by the thiocarboxylate moiety of the carrier protein ThiS. In vitro, sulfur can be provided by H(2)S. This chain is Thiazole synthase, found in Acidithiobacillus ferrooxidans (strain ATCC 23270 / DSM 14882 / CIP 104768 / NCIMB 8455) (Ferrobacillus ferrooxidans (strain ATCC 23270)).